We begin with the raw amino-acid sequence, 155 residues long: Small ribosomal subunit protein bS6 (155 aa).

A disordered region spans residues 94–155; sequence EKHEEGPSAM…RPRRPREDRV (62 aa).

It belongs to the bacterial ribosomal protein bS6 family.

Its function is as follows. Binds together with bS18 to 16S ribosomal RNA. In Rhizobium johnstonii (strain DSM 114642 / LMG 32736 / 3841) (Rhizobium leguminosarum bv. viciae), this protein is Small ribosomal subunit protein bS6.